The primary structure comprises 748 residues: Catalase-peroxidase (748 aa).

Residues 92–238 (WHSAGTYRIG…LAAVQMGLIY (147 aa)) constitute a cross-link (tryptophyl-tyrosyl-methioninium (Trp-Tyr) (with M-264)). The active-site Proton acceptor is His93. Residues 238–264 (YVNPEGPDGNPDPIASARDIRDTFARM) constitute a cross-link (tryptophyl-tyrosyl-methioninium (Tyr-Met) (with W-92)). A heme b-binding site is contributed by His279.

The protein belongs to the peroxidase family. Peroxidase/catalase subfamily. Homodimer or homotetramer. Heme b is required as a cofactor. Post-translationally, formation of the three residue Trp-Tyr-Met cross-link is important for the catalase, but not the peroxidase activity of the enzyme.

The catalysed reaction is H2O2 + AH2 = A + 2 H2O. It carries out the reaction 2 H2O2 = O2 + 2 H2O. Functionally, bifunctional enzyme with both catalase and broad-spectrum peroxidase activity. The protein is Catalase-peroxidase of Xanthomonas euvesicatoria pv. vesicatoria (strain 85-10) (Xanthomonas campestris pv. vesicatoria).